The chain runs to 138 residues: Drosulfakinins (138 aa).

A signal peptide spans 1 to 33; the sequence is MGLRSCTHFATLVMPLWALAFCFLVLVPVPAQT. A propeptide spanning residues 34 to 73 is cleaved from the precursor; the sequence is TSLQISKGDRRLQDLESNMGAESDQPNANLVGTSLSRFGD. The residue at position 82 (F82) is a Phenylalanine amide. Positions 86–108 are excised as a propeptide; it reads VPRPIIPIELDLLMDNDDENTKA. Sulfotyrosine is present on Y114. F119 is subject to Phenylalanine amide. Y131 is modified (sulfotyrosine). F136 carries the phenylalanine amide modification.

The protein belongs to the gastrin/cholecystokinin family.

The protein localises to the secreted. Functionally, drosulfakinin-0 (DSK 0) plays diverse biological roles including regulating gut muscle contraction in adults but not in larvae. The chain is Drosulfakinins from Drosophila teissieri (Fruit fly).